The primary structure comprises 636 residues: Putative cysteine-rich receptor-like protein kinase 33 (636 aa).

Positions 1 to 25 (MRKTKKISFLIFWVVLISIIGAISS) are cleaved as a signal peptide. Gnk2-homologous domains follow at residues 26-128 (QQCN…NSSF) and 138-245 (YMEH…LYPF). At 26-266 (QQCNETGYFE…PGSKRNISVG (241 aa)) the chain is on the extracellular side. Residues N29, N63, N105, N125, N149, N173, N185, N188, N250, and N262 are each glycosylated (N-linked (GlcNAc...) asparagine). Residues 267-287 (FFVAIVVATGVVISVLSTLVV) traverse the membrane as a helical segment. At 288–636 (VLVCRKRKTD…DSLIDDLVPR (349 aa)) the chain is on the cytoplasmic side. The region spanning 321-600 (FSKCNMLGQG…MMLTSNSITL (280 aa)) is the Protein kinase domain. Residues 327 to 335 (LGQGGFGEV) and K349 contribute to the ATP site. Phosphotyrosine is present on Y394. The active-site Proton acceptor is the D446. S450 is modified (phosphoserine). T486 is modified (phosphothreonine). At Y494 the chain carries Phosphotyrosine.

This sequence belongs to the protein kinase superfamily. Ser/Thr protein kinase family. CRK subfamily.

Its subcellular location is the membrane. It carries out the reaction L-seryl-[protein] + ATP = O-phospho-L-seryl-[protein] + ADP + H(+). The catalysed reaction is L-threonyl-[protein] + ATP = O-phospho-L-threonyl-[protein] + ADP + H(+). The chain is Putative cysteine-rich receptor-like protein kinase 33 (CRK33) from Arabidopsis thaliana (Mouse-ear cress).